Reading from the N-terminus, the 339-residue chain is Protein-glutamate methylesterase/protein-glutamine glutaminase 2 (339 aa).

The 118-residue stretch at 2 to 119 (NIGIVNDLPL…GLSTDASPQA (118 aa)) folds into the Response regulatory domain. D53 carries the post-translational modification 4-aspartylphosphate. In terms of domain architecture, CheB-type methylesterase spans 141 to 336 (PGPAPERGQP…PQLISRITRP (196 aa)). Residues S158, H185, and D278 contribute to the active site.

It belongs to the CheB family. In terms of processing, phosphorylated by CheA. Phosphorylation of the N-terminal regulatory domain activates the methylesterase activity.

The protein localises to the cytoplasm. It carries out the reaction [protein]-L-glutamate 5-O-methyl ester + H2O = L-glutamyl-[protein] + methanol + H(+). The enzyme catalyses L-glutaminyl-[protein] + H2O = L-glutamyl-[protein] + NH4(+). Functionally, involved in chemotaxis. Part of a chemotaxis signal transduction system that modulates chemotaxis in response to various stimuli. Catalyzes the demethylation of specific methylglutamate residues introduced into the chemoreceptors (methyl-accepting chemotaxis proteins or MCP) by CheR. Also mediates the irreversible deamidation of specific glutamine residues to glutamic acid. The sequence is that of Protein-glutamate methylesterase/protein-glutamine glutaminase 2 from Burkholderia lata (strain ATCC 17760 / DSM 23089 / LMG 22485 / NCIMB 9086 / R18194 / 383).